A 699-amino-acid polypeptide reads, in one-letter code: Ciliated left-right organizer metallopeptidase (699 aa).

Positions 1 to 18 (MKMWRLLLLGVATGRCLH) are cleaved as a signal peptide. Residues 19 to 663 (EETQKSVRLL…SLDHNPSMTE (645 aa)) are Extracellular-facing. His-238 contributes to the Zn(2+) binding site. The active site involves Glu-239. Positions 242 and 318 each coordinate Zn(2+). Residues 664–684 (LLLSTGFCLLVLILVGALGTL) traverse the membrane as a helical segment. The Cytoplasmic segment spans residues 685–699 (AYQKRAMLQVAPSTT).

This sequence belongs to the peptidase M8 family. Requires Zn(2+) as cofactor. In terms of tissue distribution, specifically expressed in ciliated left-right organizer.

The protein localises to the membrane. Putative metalloproteinase that plays a role in left-right patterning process. The chain is Ciliated left-right organizer metallopeptidase from Mus musculus (Mouse).